A 399-amino-acid chain; its full sequence is Acetate kinase (399 aa).

Asn-9 contacts Mg(2+). Lys-16 serves as a coordination point for ATP. Arg-90 contacts substrate. Asp-147 serves as the catalytic Proton donor/acceptor. Residues 207–211 (HLGNG), 281–283 (DFR), and 333–337 (GVGEN) each bind ATP. Glu-387 serves as a coordination point for Mg(2+).

The protein belongs to the acetokinase family. Homodimer. It depends on Mg(2+) as a cofactor. The cofactor is Mn(2+).

It is found in the cytoplasm. It catalyses the reaction acetate + ATP = acetyl phosphate + ADP. Its pathway is metabolic intermediate biosynthesis; acetyl-CoA biosynthesis; acetyl-CoA from acetate: step 1/2. Catalyzes the formation of acetyl phosphate from acetate and ATP. Can also catalyze the reverse reaction. This chain is Acetate kinase, found in Mycobacterium sp. (strain KMS).